A 376-amino-acid polypeptide reads, in one-letter code: GDSL esterase/lipase At5g55050 (376 aa).

The signal sequence occupies residues 1 to 29 (MPTNNTPFLTIFLLFLGLLRFDSFPGLEA). Ser46 (nucleophile) is an active-site residue. N-linked (GlcNAc...) asparagine glycosylation is found at Asn134 and Asn245. Residues Asp340 and His344 contribute to the active site.

It belongs to the 'GDSL' lipolytic enzyme family.

It localises to the secreted. In Arabidopsis thaliana (Mouse-ear cress), this protein is GDSL esterase/lipase At5g55050.